A 689-amino-acid polypeptide reads, in one-letter code: DNA-directed RNA polymerase subunit beta' (689 aa).

Cys69, Cys71, Cys87, and Cys90 together coordinate Zn(2+). Mg(2+) contacts are provided by Asp489, Asp491, and Asp493.

This sequence belongs to the RNA polymerase beta' chain family. RpoC1 subfamily. In plastids the minimal PEP RNA polymerase catalytic core is composed of four subunits: alpha, beta, beta', and beta''. When a (nuclear-encoded) sigma factor is associated with the core the holoenzyme is formed, which can initiate transcription. Mg(2+) serves as cofactor. The cofactor is Zn(2+).

It localises to the plastid. The protein localises to the chloroplast. The catalysed reaction is RNA(n) + a ribonucleoside 5'-triphosphate = RNA(n+1) + diphosphate. Its function is as follows. DNA-dependent RNA polymerase catalyzes the transcription of DNA into RNA using the four ribonucleoside triphosphates as substrates. In Helianthus annuus (Common sunflower), this protein is DNA-directed RNA polymerase subunit beta'.